A 235-amino-acid polypeptide reads, in one-letter code: Ubiquinone/menaquinone biosynthesis C-methyltransferase UbiE (235 aa).

S-adenosyl-L-methionine is bound by residues T59, D84, and S123.

It belongs to the class I-like SAM-binding methyltransferase superfamily. MenG/UbiE family.

It catalyses the reaction a 2-demethylmenaquinol + S-adenosyl-L-methionine = a menaquinol + S-adenosyl-L-homocysteine + H(+). The catalysed reaction is a 2-methoxy-6-(all-trans-polyprenyl)benzene-1,4-diol + S-adenosyl-L-methionine = a 5-methoxy-2-methyl-3-(all-trans-polyprenyl)benzene-1,4-diol + S-adenosyl-L-homocysteine + H(+). The protein operates within quinol/quinone metabolism; menaquinone biosynthesis; menaquinol from 1,4-dihydroxy-2-naphthoate: step 2/2. It participates in cofactor biosynthesis; ubiquinone biosynthesis. In terms of biological role, methyltransferase required for the conversion of demethylmenaquinol (DMKH2) to menaquinol (MKH2) and the conversion of 2-polyprenyl-6-methoxy-1,4-benzoquinol (DDMQH2) to 2-polyprenyl-3-methyl-6-methoxy-1,4-benzoquinol (DMQH2). The sequence is that of Ubiquinone/menaquinone biosynthesis C-methyltransferase UbiE from Campylobacter jejuni subsp. jejuni serotype O:23/36 (strain 81-176).